Consider the following 617-residue polypeptide: E3 ubiquitin-protein ligase ORTHRUS 1 (617 aa).

The PHD-type zinc finger occupies 12-62 (DGVCMRCQVNPPSEETLTCGTCVTPWHVPCLLPESLASSTGEWECPDCSGV). The RING-type 1 zinc-finger motif lies at 129 to 169 (CSICIQLPERPITTPCGHNFCLKCFEKWAVGQGKLTCMICR). Residues 258–407 (TRKQGVLVGE…FKVCRYLFVR (150 aa)) enclose the YDG domain. The RING-type 2 zinc finger occupies 495-552 (CQICREVLSLPVTTPCAHNFCKACLEAKFAGITQLRERSNGGRKLRAKKNIMTCPCCT). Residues 563–593 (QVNREMMEIIENFKKSEEEADASISEEEEEE) are a coiled coil. The disordered stretch occupies residues 575–617 (FKKSEEEADASISEEEEEESEPPTKKIKMDNNSVGGSGTSLSA). The span at 580-595 (EEADASISEEEEEESE) shows a compositional bias: acidic residues. A compositionally biased stretch (polar residues) spans 604 to 617 (DNNSVGGSGTSLSA).

Expressed in inflorescences and leaves.

The protein localises to the nucleus. The catalysed reaction is S-ubiquitinyl-[E2 ubiquitin-conjugating enzyme]-L-cysteine + [acceptor protein]-L-lysine = [E2 ubiquitin-conjugating enzyme]-L-cysteine + N(6)-ubiquitinyl-[acceptor protein]-L-lysine.. Its pathway is protein modification; protein ubiquitination. In terms of biological role, E3 ubiquitin-protein ligase. Participates in CpG methylation-dependent transcriptional regulation and epigenetic transcriptional silencing. Mediates ubiquitination with the E2 ubiquitin-conjugating enzymes UBC11, UBC8 and UBC8 homologs (e.g. UBC10, UBC11, UBC28 and UBC29) but not with UBC27, UBC30, UBC32, UBC34 and UBC36. Promotes methylation-mediated gene silencing leading, for example, to early flowering. Can bind to CpG, CpNpG, and CpNpN DNA motifs, with a strong preference for methylated forms, and with highest affinity for CpG substrate. The chain is E3 ubiquitin-protein ligase ORTHRUS 1 (ORTH1) from Arabidopsis thaliana (Mouse-ear cress).